The primary structure comprises 1171 residues: ATP-dependent helicase/deoxyribonuclease subunit B (1171 aa).

The UvrD-like helicase ATP-binding domain maps to 1 to 343 (MSLRFVIGRA…LVAEENYRYR (343 aa)). 8 to 15 (GRAGSGKS) is an ATP binding site. Positions 281–587 (MEQPRFHSPA…QFANIPPSLD (307 aa)) constitute a UvrD-like helicase C-terminal domain. The [4Fe-4S] cluster site is built by Cys-805, Cys-1129, Cys-1132, and Cys-1138.

This sequence belongs to the helicase family. AddB/RexB type 1 subfamily. As to quaternary structure, heterodimer of AddA and AddB. The cofactor is Mg(2+). It depends on [4Fe-4S] cluster as a cofactor.

Functionally, the heterodimer acts as both an ATP-dependent DNA helicase and an ATP-dependent, dual-direction single-stranded exonuclease. Recognizes the chi site generating a DNA molecule suitable for the initiation of homologous recombination. The AddB subunit has 5' -&gt; 3' nuclease activity but not helicase activity. This is ATP-dependent helicase/deoxyribonuclease subunit B from Bacillus anthracis.